Reading from the N-terminus, the 210-residue chain is Protein GrpE (210 aa).

The tract at residues 191 to 210 (KGGPKPAEAETNSVFDEKDA) is disordered.

The protein belongs to the GrpE family. Homodimer.

It localises to the cytoplasm. Participates actively in the response to hyperosmotic and heat shock by preventing the aggregation of stress-denatured proteins, in association with DnaK and GrpE. It is the nucleotide exchange factor for DnaK and may function as a thermosensor. Unfolded proteins bind initially to DnaJ; upon interaction with the DnaJ-bound protein, DnaK hydrolyzes its bound ATP, resulting in the formation of a stable complex. GrpE releases ADP from DnaK; ATP binding to DnaK triggers the release of the substrate protein, thus completing the reaction cycle. Several rounds of ATP-dependent interactions between DnaJ, DnaK and GrpE are required for fully efficient folding. The polypeptide is Protein GrpE (Rhizobium etli (strain CIAT 652)).